A 460-amino-acid polypeptide reads, in one-letter code: GTPase Der (460 aa).

EngA-type G domains follow at residues 2–166 (KTIA…AEER) and 175–353 (TRIA…QERK). GTP is bound by residues 8 to 15 (GRPNVGKS), 55 to 59 (DTGGL), 118 to 121 (NKLD), 181 to 188 (GQPNAGKS), 228 to 232 (DTAGL), and 293 to 296 (NKID). Positions 354–446 (KRIPTHRLTQ…LLWKWRKAEG (93 aa)) constitute a KH-like domain.

It belongs to the TRAFAC class TrmE-Era-EngA-EngB-Septin-like GTPase superfamily. EngA (Der) GTPase family. In terms of assembly, associates with the 50S ribosomal subunit.

Functionally, GTPase that plays an essential role in the late steps of ribosome biogenesis. This chain is GTPase Der, found in Methylacidiphilum infernorum (isolate V4) (Methylokorus infernorum (strain V4)).